The chain runs to 336 residues: MEKLFIPKGYKPLLSLRETEVAIKELKDFFEDSLAKNLNLTRVSAPLFVNKGSGLNDDLNGIERPVSFDMKAMPEFNIQIVHSLAKWKRLALHRYEFEHGEGLYTDMNAIRRDEDLDNIHSIYVDQWDWEKIIDKEERNLETLKETVKSIYGTFKATEDFIVAKYPHIEKILPEDITFITSQELEDRYPDLTSKERETAICKEFGAVFIIGIGGKLASGEKHDDRSPDYDDWTLNGDLLFYYPLFDEAVELSSMGIRVDEESLLKQLKIAECEERKELPFHQMLLEGKLPYTIGGGIGQSRICMFFLRKAHIGEVQASMWDEDMIRTCEENNIHLL.

The protein belongs to the class-II aminoacyl-tRNA synthetase family. AsnA subfamily.

The protein resides in the cytoplasm. The catalysed reaction is L-aspartate + NH4(+) + ATP = L-asparagine + AMP + diphosphate + H(+). Its pathway is amino-acid biosynthesis; L-asparagine biosynthesis; L-asparagine from L-aspartate (ammonia route): step 1/1. The protein is Aspartate--ammonia ligase of Clostridium perfringens (strain 13 / Type A).